The primary structure comprises 208 residues: V-type ATP synthase subunit E (208 aa).

Belongs to the V-ATPase E subunit family.

Functionally, produces ATP from ADP in the presence of a proton gradient across the membrane. In Chlamydia muridarum (strain MoPn / Nigg), this protein is V-type ATP synthase subunit E (atpE).